The primary structure comprises 102 residues: Small ribosomal subunit protein uS10m (102 aa).

The protein belongs to the universal ribosomal protein uS10 family.

The protein localises to the mitochondrion. This chain is Small ribosomal subunit protein uS10m (RPS10), found in Marchantia polymorpha (Common liverwort).